Here is a 290-residue protein sequence, read N- to C-terminus: MRSHILGKIELDQTRLAPDLAYLAAVPTVEEEYDEFSNGFWKHVPLWNASGDSEDRLYRDLKDAAAQPTAHVEHVPYLKEIVTTVFDGTHLQMARSRNLKNAIVIPHRDFVELDREVDRYFRTFMVLEDSPLAFHSNEDTVIHMRPGEIWFLDAATVHSAVNFSEISRQSLCVDFAFDGPFDEKEIFADATLYAPGSTPDLPERRPFTAEHRRRILSLGQVIERENFRDILFLLSKVHYKYDVHPSETYDWLIEISKQAGDEKMVVKAEQIRDFAVEARALSERFSLTSW.

The Fe cation site is built by His107, Asp109, and His158. Position 168 (Arg168) interacts with 2-oxoglutarate.

It belongs to the L-proline cis-4-/cis-3-hydroxylase family. Homodimer. The cofactor is Fe(2+).

It carries out the reaction L-proline + 2-oxoglutarate + O2 = cis-3-hydroxy-L-proline + succinate + CO2. With respect to regulation, inhibited by metal ions such as Co(2+), Zn(2+), Ni(2+) or Cu(2+). Is also inhibited by EDTA in vitro. Its function is as follows. Dioxygenase that catalyzes the 2-oxoglutarate-dependent selective hydroxylation of free L-proline to cis-3-hydroxy-L-proline (cis-3-Hyp). The sequence is that of L-proline cis-3-hydroxylase 2 from Streptomyces sp.